The following is a 168-amino-acid chain: MEFQPVFAGAEISIINTLWYLIVFSILLLAVKHYAWGPVKDMMEKRRQKVIDDLDQAASDRKKAETLANEREAALKNSRQEATQILSDAKSNAQKTGKQIVSEAMAEASAIREKAKADAAQAETDALNEAREEVADLSVTIAEKVIAKNLSAADQKDLVDQFIKGLND.

Residues 11–31 traverse the membrane as a helical segment; it reads EISIINTLWYLIVFSILLLAV.

This sequence belongs to the ATPase B chain family. As to quaternary structure, F-type ATPases have 2 components, F(1) - the catalytic core - and F(0) - the membrane proton channel. F(1) has five subunits: alpha(3), beta(3), gamma(1), delta(1), epsilon(1). F(0) has three main subunits: a(1), b(2) and c(10-14). The alpha and beta chains form an alternating ring which encloses part of the gamma chain. F(1) is attached to F(0) by a central stalk formed by the gamma and epsilon chains, while a peripheral stalk is formed by the delta and b chains.

It localises to the cell membrane. F(1)F(0) ATP synthase produces ATP from ADP in the presence of a proton or sodium gradient. F-type ATPases consist of two structural domains, F(1) containing the extramembraneous catalytic core and F(0) containing the membrane proton channel, linked together by a central stalk and a peripheral stalk. During catalysis, ATP synthesis in the catalytic domain of F(1) is coupled via a rotary mechanism of the central stalk subunits to proton translocation. Functionally, component of the F(0) channel, it forms part of the peripheral stalk, linking F(1) to F(0). The polypeptide is ATP synthase subunit b (Lactobacillus delbrueckii subsp. bulgaricus (strain ATCC 11842 / DSM 20081 / BCRC 10696 / JCM 1002 / NBRC 13953 / NCIMB 11778 / NCTC 12712 / WDCM 00102 / Lb 14)).